Here is a 267-residue protein sequence, read N- to C-terminus: Putative [LysW]-aminoadipate/[LysW]-glutamate kinase (267 aa).

Residues 37–38 (GG), R64, and N169 contribute to the substrate site.

This sequence belongs to the acetylglutamate kinase family. LysZ subfamily.

It is found in the cytoplasm. The enzyme catalyses [amino-group carrier protein]-C-terminal-N-(1,4-dicarboxybutan-1-yl)-L-glutamine + ATP = [amino-group carrier protein]-C-terminal-N-(1-carboxy-5-phosphooxy-5-oxopentan-1-yl)-L-glutamine + ADP. It catalyses the reaction [amino-group carrier protein]-C-terminal-gamma-(L-glutamyl)-L-glutamate + ATP = [amino-group carrier protein]-C-terminal-gamma-(5-phospho-L-glutamyl)-L-glutamate + ADP. Its pathway is amino-acid biosynthesis; L-lysine biosynthesis via AAA pathway; L-lysine from L-alpha-aminoadipate (Thermus route): step 2/5. The protein operates within amino-acid biosynthesis; L-arginine biosynthesis. Its function is as follows. Involved in both the arginine and lysine biosynthetic pathways. Phosphorylates the LysW-bound precursors glutamate (for arginine biosynthesis), respectively alpha-aminoadipate (for lysine biosynthesis). This is Putative [LysW]-aminoadipate/[LysW]-glutamate kinase from Nitrosopumilus maritimus (strain SCM1).